Here is a 198-residue protein sequence, read N- to C-terminus: Ribosome maturation factor RimM (198 aa).

A PRC barrel domain is found at 92 to 168 (DDEYYHADLI…IELPAEIEGE (77 aa)). The span at 163–172 (AEIEGEDQDS) shows a compositional bias: acidic residues. The segment at 163-198 (AEIEGEDQDSSDNAGSPEGDAAASNSARHPRESGDP) is disordered.

Belongs to the RimM family. As to quaternary structure, binds ribosomal protein uS19.

The protein resides in the cytoplasm. In terms of biological role, an accessory protein needed during the final step in the assembly of 30S ribosomal subunit, possibly for assembly of the head region. Essential for efficient processing of 16S rRNA. May be needed both before and after RbfA during the maturation of 16S rRNA. It has affinity for free ribosomal 30S subunits but not for 70S ribosomes. The polypeptide is Ribosome maturation factor RimM (Bradyrhizobium sp. (strain BTAi1 / ATCC BAA-1182)).